Here is a 784-residue protein sequence, read N- to C-terminus: DNA repair and recombination protein RAD54-like (784 aa).

The segment at M1–A50 is disordered. A required for chromatin remodeling, strand pairing activities and coupling of ATPase activity region spans residues R2–Q9. The residue at position 20 (S20) is a Phosphoserine. Position 22 is a phosphothreonine (T22). A compositionally biased stretch (basic and acidic residues) spans E36–R47. In terms of domain architecture, Helicase ATP-binding spans E172 to E346. ATP is bound at residue D185–T192. A DEGH box motif is present at residues D297 to H300. Residues L503 to T660 form the Helicase C-terminal domain. Low complexity predominate over residues V747–E756. The disordered stretch occupies residues V747 to F784. Residues D775 to F784 show a composition bias toward acidic residues.

This sequence belongs to the SNF2/RAD54 helicase family. In terms of assembly, interacts (via N-terminus) with spn-A/Rad51.

It localises to the nucleus. Functionally, involved in mitotic DNA repair and meiotic recombination. Functions in the recombinational DNA repair pathway. Essential for interhomolog gene conversion (GC), but may have a less important role in intersister GC than spn-A/Rad51. In the presence of DNA, spn-A/Rad51 enhances the ATPase activity of okr/Rad54. This Drosophila erecta (Fruit fly) protein is DNA repair and recombination protein RAD54-like.